The sequence spans 319 residues: Nucleotide-binding protein Rru_A3448 (319 aa).

Positions 1–34 are disordered; the sequence is MGRSASLLRLRDPAPLPTDIAPDPAEAPPSPAAD. Residue 42–49 coordinates ATP; sequence GMSGAGRT. 90–93 serves as a coordination point for GTP; it reads DTRT.

The protein belongs to the RapZ-like family.

In terms of biological role, displays ATPase and GTPase activities. The sequence is that of Nucleotide-binding protein Rru_A3448 from Rhodospirillum rubrum (strain ATCC 11170 / ATH 1.1.1 / DSM 467 / LMG 4362 / NCIMB 8255 / S1).